The primary structure comprises 204 residues: Somatotropin (204 aa).

An N-terminal signal peptide occupies residues 1–17; sequence MNSVVLQLSVVCLGVSS. Gln-18 is subject to Pyrrolidone carboxylic acid. A Zn(2+)-binding site is contributed by His-36. A disulfide bridge connects residues Cys-69 and Cys-177. Glu-186 provides a ligand contact to Zn(2+). Cysteines 194 and 202 form a disulfide.

This sequence belongs to the somatotropin/prolactin family.

The protein localises to the secreted. In terms of biological role, growth hormone plays an important role in growth control and involved in the regulation of several anabolic processes. This is Somatotropin (gh) from Oreochromis mossambicus (Mozambique tilapia).